Here is an 863-residue protein sequence, read N- to C-terminus: Ubiquitin carboxyl-terminal hydrolase 13 (863 aa).

Ser-114 is subject to Phosphoserine; by AURKB. Position 122 is a phosphothreonine (Thr-122). The UBP-type; degenerate zinc-finger motif lies at 187-295; it reads PVSKYANNLT…KHLAHFGIDM (109 aa). Zn(2+) is bound by residues Cys-211, Cys-214, Cys-231, and His-244. Lys-311 participates in a covalent cross-link: Glycyl lysine isopeptide (Lys-Gly) (interchain with G-Cter in SUMO2). Residues 336-861 enclose the USP domain; that stretch reads TGLKNLGNSC…LGYMYFYRRI (526 aa). Residue Cys-345 is the Nucleophile of the active site. A Glycyl lysine isopeptide (Lys-Gly) (interchain with G-Cter in SUMO2) cross-link involves residue Lys-405. UBA domains follow at residues 652 to 693 and 727 to 767; these read DIDE…IIVH and QPPE…IFSH. His-823 functions as the Proton acceptor in the catalytic mechanism.

It belongs to the peptidase C19 family. In terms of assembly, interacts with UFD1. Interacts (via UBA domains) with SIAH2 (when ubiquitinated). Interacts with BAG6; the interaction is direct and may mediate UBL4A deubiquitination. Interacts (via UBA 2 domain) with AMFR; the interaction is direct. Interacts with UBL4A; may be indirect via BAG6. Interacts with NEDD4. Post-translationally, phosphorylated by AURKB at Ser-114; leading to stabilization of cell cycle proteins such as SKP2 and AURKB, but not MCL1. In terms of tissue distribution, highly expressed in ovary and testes.

Its subcellular location is the cytoplasm. It catalyses the reaction Thiol-dependent hydrolysis of ester, thioester, amide, peptide and isopeptide bonds formed by the C-terminal Gly of ubiquitin (a 76-residue protein attached to proteins as an intracellular targeting signal).. Specifically inhibited by spautin-1 (specific and potent autophagy inhibitor-1), a derivative of MBCQ that binds to USP13 and inhibits deubiquitinase activity. Regulated by PIK3C3/VPS34-containing complexes. The weak deubiquitinase activity in vitro suggests the existence of some mechanism that activates the enzyme. Functionally, deubiquitinase that mediates deubiquitination of target proteins such as BECN1, MITF, SKP2 and USP10 and is involved in various processes such as autophagy, endoplasmic reticulum-associated degradation (ERAD), cell cycle progression or DNA damage response. Component of a regulatory loop that controls autophagy and p53/TP53 levels: mediates deubiquitination of BECN1, a key regulator of autophagy, leading to stabilize the PIK3C3/VPS34-containing complexes. Alternatively, forms with NEDD4 a deubiquitination complex, which subsequently stabilizes VPS34 to promote autophagy. Also deubiquitinates USP10, an essential regulator of p53/TP53 stability. In turn, PIK3C3/VPS34-containing complexes regulate USP13 stability, suggesting the existence of a regulatory system by which PIK3C3/VPS34-containing complexes regulate p53/TP53 protein levels via USP10 and USP13. Recruited by nuclear UFD1 and mediates deubiquitination of SKP2, thereby regulating endoplasmic reticulum-associated degradation (ERAD). Also regulates ERAD through the deubiquitination of UBL4A a component of the BAG6/BAT3 complex. Mediates stabilization of SIAH2 independently of deubiquitinase activity: binds ubiquitinated SIAH2 and acts by impairing SIAH2 autoubiquitination. Regulates the cell cycle progression by stabilizing cell cycle proteins such as SKP2 and AURKB. In addition, plays an important role in maintaining genomic stability and in DNA replication checkpoint activation via regulation of RAP80 and TOPBP1. Deubiquitinates the multifunctional protein HMGB1 and subsequently drives its nucleocytoplasmic localization and its secretion. Positively regulates type I and type II interferon signalings by deubiquitinating STAT1 but negatively regulates antiviral response by deubiquitinating STING1. This Homo sapiens (Human) protein is Ubiquitin carboxyl-terminal hydrolase 13 (USP13).